The primary structure comprises 174 residues: MASAVLGLTLRWVMFLSAVLLLLLPGASAQEPPGVGCSEYTNRSCEECLRNVSCLWCNENKACLDYPVRKILPPASLCKLSSARWGVCWVNFEALIITMSVLGGSVLLGITVCCCCCCRRKRSRKPDKSDERAMREQEERRVRQEERRAEMKSRHDEIRKKYGLFKEQNPYEKF.

Positions 1-29 (MASAVLGLTLRWVMFLSAVLLLLLPGASA) are cleaved as a signal peptide. The Extracellular portion of the chain corresponds to 30-93 (QEPPGVGCSE…RWGVCWVNFE (64 aa)). Positions 36–89 (GCSEYTNRSCEECLRNVSCLWCNENKACLDYPVRKILPPASLCKLSSARWGVCW) constitute a PSI domain. Residues N42 and N51 are each glycosylated (N-linked (GlcNAc...) asparagine). Residues 94–114 (ALIITMSVLGGSVLLGITVCC) traverse the membrane as a helical segment. At 115 to 174 (CCCCRRKRSRKPDKSDERAMREQEERRVRQEERRAEMKSRHDEIRKKYGLFKEQNPYEKF) the chain is on the cytoplasmic side. Residues 126–155 (PDKSDERAMREQEERRVRQEERRAEMKSRH) form a disordered region. Positions 127–163 (DKSDERAMREQEERRVRQEERRAEMKSRHDEIRKKYG) form a coiled coil. Phosphotyrosine is present on Y171.

Interacts with PTTG1.

Its subcellular location is the cell membrane. The protein resides in the cytoplasm. It is found in the nucleus. Its function is as follows. May facilitate PTTG1 nuclear translocation. The protein is Pituitary tumor-transforming gene 1 protein-interacting protein (Pttg1ip) of Rattus norvegicus (Rat).